The following is a 132-amino-acid chain: Group 2 truncated hemoglobin YjbI (132 aa).

The heme site is built by Thr45, Lys48, Tyr63, and His76.

Belongs to the truncated hemoglobin family. Group II subfamily. Monomer. It depends on heme as a cofactor.

Hemoglobin-like protein that exhibits a low peroxidase activity. Its very high oxygen affinity may rule out the possibility that it is involved in oxygen transport. This chain is Group 2 truncated hemoglobin YjbI (yjbI), found in Bacillus subtilis (strain 168).